Reading from the N-terminus, the 33-residue chain is Cytochrome b6-f complex subunit 5 (33 aa).

The chain crosses the membrane as a helical span at residues leucine 5 to alanine 25.

This sequence belongs to the PetG family. The 4 large subunits of the cytochrome b6-f complex are cytochrome b6, subunit IV (17 kDa polypeptide, PetD), cytochrome f and the Rieske protein, while the 4 small subunits are PetG, PetL, PetM and PetN. The complex functions as a dimer.

Its subcellular location is the plastid. The protein resides in the chloroplast thylakoid membrane. Its function is as follows. Component of the cytochrome b6-f complex, which mediates electron transfer between photosystem II (PSII) and photosystem I (PSI), cyclic electron flow around PSI, and state transitions. PetG is required for either the stability or assembly of the cytochrome b6-f complex. The sequence is that of Cytochrome b6-f complex subunit 5 from Bigelowiella natans (Pedinomonas minutissima).